The chain runs to 263 residues: Probable cyclic nucleotide phosphodiesterase CPS_4178 (263 aa).

Fe cation is bound by residues Asp21, His23, Asp62, Asn94, His160, His198, and His200. Residues His23, Asp62, and 94 to 95 (NH) each bind AMP. Residue His200 participates in AMP binding.

This sequence belongs to the cyclic nucleotide phosphodiesterase class-III family. Requires Fe(2+) as cofactor.

The polypeptide is Probable cyclic nucleotide phosphodiesterase CPS_4178 (Colwellia psychrerythraea (strain 34H / ATCC BAA-681) (Vibrio psychroerythus)).